Consider the following 340-residue polypeptide: Eukaryotic translation initiation factor 3 subunit I (340 aa).

WD repeat units follow at residues 8-47 (GHER…RLGT), 50-89 (GHQG…CVKV), 91-135 (DFPT…GEGN), 150-189 (CEQS…QLQN), 194-233 (EFDY…VMKT), and 291-330 (GHFG…FDFM).

This sequence belongs to the eIF-3 subunit I family. Component of the eukaryotic translation initiation factor 3 (eIF-3) complex.

The protein localises to the cytoplasm. Functionally, component of the eukaryotic translation initiation factor 3 (eIF-3) complex, which is involved in protein synthesis of a specialized repertoire of mRNAs and, together with other initiation factors, stimulates binding of mRNA and methionyl-tRNAi to the 40S ribosome. The eIF-3 complex specifically targets and initiates translation of a subset of mRNAs involved in cell proliferation. This chain is Eukaryotic translation initiation factor 3 subunit I, found in Coccidioides immitis (strain RS) (Valley fever fungus).